The primary structure comprises 580 residues: DNA mismatch repair protein MutL (580 aa).

Belongs to the DNA mismatch repair MutL/HexB family.

In terms of biological role, this protein is involved in the repair of mismatches in DNA. It is required for dam-dependent methyl-directed DNA mismatch repair. May act as a 'molecular matchmaker', a protein that promotes the formation of a stable complex between two or more DNA-binding proteins in an ATP-dependent manner without itself being part of a final effector complex. The sequence is that of DNA mismatch repair protein MutL from Chlamydia felis (strain Fe/C-56) (Chlamydophila felis).